Reading from the N-terminus, the 360-residue chain is Phenylalanine--tRNA ligase alpha subunit (360 aa).

Residue E260 coordinates Mg(2+).

This sequence belongs to the class-II aminoacyl-tRNA synthetase family. Phe-tRNA synthetase alpha subunit type 1 subfamily. As to quaternary structure, tetramer of two alpha and two beta subunits. Mg(2+) is required as a cofactor.

The protein resides in the cytoplasm. It carries out the reaction tRNA(Phe) + L-phenylalanine + ATP = L-phenylalanyl-tRNA(Phe) + AMP + diphosphate + H(+). The polypeptide is Phenylalanine--tRNA ligase alpha subunit (Rhizobium etli (strain ATCC 51251 / DSM 11541 / JCM 21823 / NBRC 15573 / CFN 42)).